Consider the following 428-residue polypeptide: Elongation factor 1-alpha (428 aa).

Residues 5–215 (KPHINIVFIG…ALDQMPEPPK (211 aa)) form the tr-type G domain. The segment at 14–21 (GHVDHGKS) is G1. A GTP-binding site is contributed by 14–21 (GHVDHGKS). Ser21 serves as a coordination point for Mg(2+). Positions 68 to 72 (GITID) are G2. The tract at residues 89–92 (DAPG) is G3. Residues 89–93 (DAPGH) and 144–147 (NKMD) contribute to the GTP site. The G4 stretch occupies residues 144-147 (NKMD). Positions 181–183 (SAW) are G5.

It belongs to the TRAFAC class translation factor GTPase superfamily. Classic translation factor GTPase family. EF-Tu/EF-1A subfamily.

The protein localises to the cytoplasm. It carries out the reaction GTP + H2O = GDP + phosphate + H(+). Its function is as follows. GTP hydrolase that promotes the GTP-dependent binding of aminoacyl-tRNA to the A-site of ribosomes during protein biosynthesis. This Thermococcus celer protein is Elongation factor 1-alpha.